The primary structure comprises 196 residues: ATP-dependent Clp protease proteolytic subunit (196 aa).

Ser98 acts as the Nucleophile in catalysis. Residue His123 is part of the active site.

Belongs to the peptidase S14 family. In terms of assembly, fourteen ClpP subunits assemble into 2 heptameric rings which stack back to back to give a disk-like structure with a central cavity, resembling the structure of eukaryotic proteasomes.

The protein localises to the cytoplasm. The enzyme catalyses Hydrolysis of proteins to small peptides in the presence of ATP and magnesium. alpha-casein is the usual test substrate. In the absence of ATP, only oligopeptides shorter than five residues are hydrolyzed (such as succinyl-Leu-Tyr-|-NHMec, and Leu-Tyr-Leu-|-Tyr-Trp, in which cleavage of the -Tyr-|-Leu- and -Tyr-|-Trp bonds also occurs).. In terms of biological role, cleaves peptides in various proteins in a process that requires ATP hydrolysis. Has a chymotrypsin-like activity. Plays a major role in the degradation of misfolded proteins. The chain is ATP-dependent Clp protease proteolytic subunit from Acidobacterium capsulatum (strain ATCC 51196 / DSM 11244 / BCRC 80197 / JCM 7670 / NBRC 15755 / NCIMB 13165 / 161).